We begin with the raw amino-acid sequence, 145 residues long: Large ribosomal subunit protein bL19 (145 aa).

Positions 114–136 (IAEKMESPAAKATREAAKKEAKA) are enriched in basic and acidic residues. Residues 114–145 (IAEKMESPAAKATREAAKKEAKAAKKNAAPAE) form a disordered region.

It belongs to the bacterial ribosomal protein bL19 family.

Its function is as follows. This protein is located at the 30S-50S ribosomal subunit interface and may play a role in the structure and function of the aminoacyl-tRNA binding site. This chain is Large ribosomal subunit protein bL19, found in Methylocella silvestris (strain DSM 15510 / CIP 108128 / LMG 27833 / NCIMB 13906 / BL2).